Consider the following 125-residue polypeptide: Methylglyoxal synthase (125 aa).

The 125-residue stretch at 1-125 (MTERLRIALI…TAEKLIKALD (125 aa)) folds into the MGS-like domain. Substrate contacts are provided by residues H12, K16, 38 to 41 (TGTT), and 59 to 60 (SG). D65 (proton donor/acceptor) is an active-site residue. Substrate is bound at residue H92.

It belongs to the methylglyoxal synthase family.

The enzyme catalyses dihydroxyacetone phosphate = methylglyoxal + phosphate. Catalyzes the formation of methylglyoxal from dihydroxyacetone phosphate. The sequence is that of Methylglyoxal synthase from Brucella anthropi (strain ATCC 49188 / DSM 6882 / CCUG 24695 / JCM 21032 / LMG 3331 / NBRC 15819 / NCTC 12168 / Alc 37) (Ochrobactrum anthropi).